Reading from the N-terminus, the 201-residue chain is Recombination protein RecR (201 aa).

The C4-type zinc-finger motif lies at 60–75; that stretch reads CETCGNIDTRSPCTIC. Residues 83-178 enclose the Toprim domain; the sequence is SIIVVVADVA…KVTRLAHGVP (96 aa).

Belongs to the RecR family.

Its function is as follows. May play a role in DNA repair. It seems to be involved in an RecBC-independent recombinational process of DNA repair. It may act with RecF and RecO. The sequence is that of Recombination protein RecR from Nitrobacter winogradskyi (strain ATCC 25391 / DSM 10237 / CIP 104748 / NCIMB 11846 / Nb-255).